The primary structure comprises 253 residues: Tetraspanin-3 (253 aa).

The Cytoplasmic segment spans residues 1-11 (MGQCGITSSKT). A helical membrane pass occupies residues 12-32 (VLVFLNLIFWGAAGILCYVGA). At 33–50 (YVFITYDDYDHFFEDVYT) the chain is on the extracellular side. Residues 51 to 71 (LFPAVVIIAVGALLFIIGLIG) form a helical membrane-spanning segment. Topologically, residues 72-85 (CCATIRESRCGLAT) are cytoplasmic. A helical membrane pass occupies residues 86-106 (FVFILLLVFVTEVVVVVLGYV). The Extracellular segment spans residues 107–212 (YRAKVENEVD…KKLQEILMHV (106 aa)). N-linked (GlcNAc...) asparagine glycans are attached at residues Asn127, Asn152, Asn167, and Asn183. A helical transmembrane segment spans residues 213–233 (IWAALAFAAIQLLGMLCACIV). Residues 234–253 (LCRRSRDPAYELLITGGTYA) are Cytoplasmic-facing.

This sequence belongs to the tetraspanin (TM4SF) family. As to quaternary structure, interacts with claudin-11/CLDN11 and integrins.

It is found in the membrane. In terms of biological role, regulates the proliferation and migration of oligodendrocytes, a process essential for normal myelination and repair. This chain is Tetraspanin-3 (Tspan3), found in Mus musculus (Mouse).